The chain runs to 181 residues: Transcriptional repressor NrdR (181 aa).

A zinc finger lies at 3–34; sequence CPFCRHPDSRVVDSREAEEGSAIRRRRSCLSC. The 91-residue stretch at 46–136 folds into the ATP-cone domain; it reads LQVRKRSGAA…VYLAFESLTD (91 aa). The segment at 148 to 181 is disordered; sequence AAGPPTTRDGPARPVPRGAVDVSPVIGTQQVHSR.

It belongs to the NrdR family. Requires Zn(2+) as cofactor.

In terms of biological role, negatively regulates transcription of bacterial ribonucleotide reductase nrd genes and operons by binding to NrdR-boxes. The sequence is that of Transcriptional repressor NrdR from Frankia casuarinae (strain DSM 45818 / CECT 9043 / HFP020203 / CcI3).